The following is a 756-amino-acid chain: Serine/threonine-protein kinase tousled-like 1-B (756 aa).

Composition is skewed to low complexity over residues Met-1–Ser-12 and Ser-23–Pro-34. Disordered regions lie at residues Met-1–Arg-56 and Val-69–Ser-185. Residues Glu-45 to Arg-56 are compositionally biased toward basic and acidic residues. The segment covering Asn-72 to Lys-85 has biased composition (gly residues). Low complexity predominate over residues Ser-93–Ser-103. Basic and acidic residues predominate over residues Ser-104–Arg-120. A coiled-coil region spans residues Asp-243–Met-268. Residues Lys-339 to Pro-375 are disordered. The segment covering Ser-347 to Pro-357 has biased composition (low complexity). Positions Phe-397 to Glu-435 form a coiled coil. Residues Tyr-450–Leu-728 enclose the Protein kinase domain. ATP-binding positions include Leu-456–Val-464 and Lys-479. The active-site Proton acceptor is Asp-580. The interval Arg-734–Tyr-756 is disordered. Over residues Ser-735–Pro-745 the composition is skewed to polar residues.

It belongs to the protein kinase superfamily. Ser/Thr protein kinase family. Mg(2+) serves as cofactor.

Its subcellular location is the nucleus. The catalysed reaction is L-seryl-[protein] + ATP = O-phospho-L-seryl-[protein] + ADP + H(+). It catalyses the reaction L-threonyl-[protein] + ATP = O-phospho-L-threonyl-[protein] + ADP + H(+). This is Serine/threonine-protein kinase tousled-like 1-B (tlk1b) from Danio rerio (Zebrafish).